The following is a 341-amino-acid chain: L-threonine 3-dehydrogenase (341 aa).

Position 38 (C38) interacts with Zn(2+). Residues T40 and H43 each act as charge relay system in the active site. Residues H63, E64, C93, C96, C99, and C107 each contribute to the Zn(2+) site. NAD(+)-binding positions include I175, D195, R200, L262–I264, and I286–Y287.

It belongs to the zinc-containing alcohol dehydrogenase family. In terms of assembly, homotetramer. Zn(2+) serves as cofactor.

Its subcellular location is the cytoplasm. It carries out the reaction L-threonine + NAD(+) = (2S)-2-amino-3-oxobutanoate + NADH + H(+). It participates in amino-acid degradation; L-threonine degradation via oxydo-reductase pathway; glycine from L-threonine: step 1/2. Functionally, catalyzes the NAD(+)-dependent oxidation of L-threonine to 2-amino-3-ketobutyrate. This chain is L-threonine 3-dehydrogenase, found in Escherichia coli O17:K52:H18 (strain UMN026 / ExPEC).